A 185-amino-acid polypeptide reads, in one-letter code: Ribosome-recycling factor (185 aa).

Belongs to the RRF family.

The protein localises to the cytoplasm. Its function is as follows. Responsible for the release of ribosomes from messenger RNA at the termination of protein biosynthesis. May increase the efficiency of translation by recycling ribosomes from one round of translation to another. The polypeptide is Ribosome-recycling factor (Lactococcus lactis subsp. lactis (strain IL1403) (Streptococcus lactis)).